We begin with the raw amino-acid sequence, 466 residues long: Ribulose bisphosphate carboxylase large chain (466 aa).

Residue Lys-5 is modified to N6,N6,N6-trimethyllysine. 2 residues coordinate substrate: Asn-114 and Thr-164. Lys-166 (proton acceptor) is an active-site residue. Lys-168 contacts substrate. Mg(2+) is bound by residues Lys-192, Asp-194, and Glu-195. Position 192 is an N6-carboxylysine (Lys-192). The active-site Proton acceptor is His-285. Substrate is bound by residues Arg-286, His-318, and Ser-370.

This sequence belongs to the RuBisCO large chain family. Type I subfamily. In terms of assembly, heterohexadecamer of 8 large chains and 8 small chains; disulfide-linked. The disulfide link is formed within the large subunit homodimers. The cofactor is Mg(2+). In terms of processing, the disulfide bond which can form in the large chain dimeric partners within the hexadecamer appears to be associated with oxidative stress and protein turnover.

Its subcellular location is the plastid. The protein localises to the chloroplast. It catalyses the reaction 2 (2R)-3-phosphoglycerate + 2 H(+) = D-ribulose 1,5-bisphosphate + CO2 + H2O. It carries out the reaction D-ribulose 1,5-bisphosphate + O2 = 2-phosphoglycolate + (2R)-3-phosphoglycerate + 2 H(+). Functionally, ruBisCO catalyzes two reactions: the carboxylation of D-ribulose 1,5-bisphosphate, the primary event in carbon dioxide fixation, as well as the oxidative fragmentation of the pentose substrate in the photorespiration process. Both reactions occur simultaneously and in competition at the same active site. The protein is Ribulose bisphosphate carboxylase large chain of Cercidiphyllum japonicum (Katsura tree).